A 154-amino-acid polypeptide reads, in one-letter code: Interleukin-2 (154 aa).

Positions 1–20 are cleaved as a signal peptide; sequence MYRMQLLSCIALSLALVTNS. T23 carries an O-linked (GalNAc...) threonine glycan. A disulfide bond links C78 and C126.

The protein belongs to the IL-2 family.

The protein resides in the secreted. In terms of biological role, cytokine produced by activated CD4-positive helper T-cells and to a lesser extend activated CD8-positive T-cells and natural killer (NK) cells that plays pivotal roles in the immune response and tolerance. Binds to a receptor complex composed of either the high-affinity trimeric IL-2R (IL2RA/CD25, IL2RB/CD122 and IL2RG/CD132) or the low-affinity dimeric IL-2R (IL2RB and IL2RG). Interaction with the receptor leads to oligomerization and conformation changes in the IL-2R subunits resulting in downstream signaling starting with phosphorylation of JAK1 and JAK3. In turn, JAK1 and JAK3 phosphorylate the receptor to form a docking site leading to the phosphorylation of several substrates including STAT5. This process leads to activation of several pathways including STAT, phosphoinositide-3-kinase/PI3K and mitogen-activated protein kinase/MAPK pathways. Functions as a T-cell growth factor and can increase NK-cell cytolytic activity as well. Promotes strong proliferation of activated B-cells and subsequently immunoglobulin production. Plays a pivotal role in regulating the adaptive immune system by controlling the survival and proliferation of regulatory T-cells, which are required for the maintenance of immune tolerance. Moreover, participates in the differentiation and homeostasis of effector T-cell subsets, including Th1, Th2, Th17 as well as memory CD8-positive T-cells. The polypeptide is Interleukin-2 (IL2) (Papio anubis (Olive baboon)).